Reading from the N-terminus, the 239-residue chain is Orotidine 5'-phosphate decarboxylase (239 aa).

Residues D15, K37, 64–73 (DLKFHDIPNT), T126, R187, Q196, G216, and R217 each bind substrate. The active-site Proton donor is the K66.

Belongs to the OMP decarboxylase family. Type 1 subfamily. In terms of assembly, homodimer.

It carries out the reaction orotidine 5'-phosphate + H(+) = UMP + CO2. Its pathway is pyrimidine metabolism; UMP biosynthesis via de novo pathway; UMP from orotate: step 2/2. Its function is as follows. Catalyzes the decarboxylation of orotidine 5'-monophosphate (OMP) to uridine 5'-monophosphate (UMP). The polypeptide is Orotidine 5'-phosphate decarboxylase (Geobacter metallireducens (strain ATCC 53774 / DSM 7210 / GS-15)).